A 359-amino-acid chain; its full sequence is Cinnamyl alcohol dehydrogenase 8 (359 aa).

Cys46 lines the Zn(2+) pocket. Ser48 is a binding site for NADP(+). The Zn(2+) site is built by His68, Glu69, Cys99, Cys102, Cys105, Cys113, and Cys162. NADP(+) is bound by residues Thr166, 187–192 (GLGGLG), 210–215 (STSEKK), Thr250, Gly274, and 297–299 (SMI).

This sequence belongs to the zinc-containing alcohol dehydrogenase family. Homodimer. Zn(2+) serves as cofactor. As to expression, expressed in the differentiation and elongation zones of primary and lateral roots. Expressed in the hypocotyl, cotyledon veins, vasculature of the first rosette leaves, hydathodes and trichomes. In stems, expressed in the vascular cambium and developing xylem tissues. Expressed in the style, anthers, stamen filaments, stigmatic regions in flowers, and abscission and style regions of siliques.

It carries out the reaction (E)-cinnamyl alcohol + NADP(+) = (E)-cinnamaldehyde + NADPH + H(+). It functions in the pathway aromatic compound metabolism; phenylpropanoid biosynthesis. Its function is as follows. Involved in lignin biosynthesis. Catalyzes the final step specific for the production of lignin monomers. Catalyzes the NADPH-dependent reduction of coniferaldehyde, 5-hydroxyconiferaldehyde, sinapaldehyde, 4-coumaraldehyde and caffeyl aldehyde to their respective alcohols. The protein is Cinnamyl alcohol dehydrogenase 8 (CAD8) of Arabidopsis thaliana (Mouse-ear cress).